Here is a 283-residue protein sequence, read N- to C-terminus: Thymidylate synthase (283 aa).

Arg22 contacts dUMP. The active-site Nucleophile is Cys160. DUMP contacts are provided by residues 180–183, Asn191, and 221–223; these read RSCD and HIY. Asp183 contacts (6R)-5,10-methylene-5,6,7,8-tetrahydrofolate. Residue Ser282 coordinates (6R)-5,10-methylene-5,6,7,8-tetrahydrofolate.

It belongs to the thymidylate synthase family. Bacterial-type ThyA subfamily. Homodimer.

The protein localises to the cytoplasm. The catalysed reaction is dUMP + (6R)-5,10-methylene-5,6,7,8-tetrahydrofolate = 7,8-dihydrofolate + dTMP. The protein operates within pyrimidine metabolism; dTTP biosynthesis. In terms of biological role, catalyzes the reductive methylation of 2'-deoxyuridine-5'-monophosphate (dUMP) to 2'-deoxythymidine-5'-monophosphate (dTMP) while utilizing 5,10-methylenetetrahydrofolate (mTHF) as the methyl donor and reductant in the reaction, yielding dihydrofolate (DHF) as a by-product. This enzymatic reaction provides an intracellular de novo source of dTMP, an essential precursor for DNA biosynthesis. The polypeptide is Thymidylate synthase (Haemophilus influenzae (strain 86-028NP)).